Here is a 707-residue protein sequence, read N- to C-terminus: F-box/WD repeat-containing protein 7 (707 aa).

Residues 1–151 (MNQELLSVGS…SVTNSSSIVD (151 aa)) are disordered. The residue at position 26 (Ser26) is a Phosphoserine; by ATM. Over residues 57–68 (GEVVGVEPRPGG) the composition is skewed to low complexity. The segment covering 69 to 84 (QNDSQQGQLEENNNRF) has biased composition (polar residues). Over residues 87–129 (VDEDSSGNQEEQEEDEEHAGEQDEEDEEEEEMDQESDDFDQSD) the composition is skewed to acidic residues. Residues 130 to 139 (DSSREDEHTH) show a composition bias toward basic and acidic residues. The residue at position 205 (Thr205) is a Phosphothreonine. The residue at position 227 (Ser227) is a Phosphoserine; by SGK1. The region spanning 278–324 (RDFISLLPKELALYVLSFLEPKDLLQAAQTCRYWRILAEDNLLWREK) is the F-box domain. WD repeat units lie at residues 378-418 (GHDD…RTLV), 420-456 (HTGG…CIHT), 459-498 (GHTS…HVLM), 500-536 (HVAA…CLHT), 539-578 (GHTN…HTLT), 580-618 (HQSL…QTLQ), and 622-659 (KHQS…FIRN).

As to quaternary structure, homodimer; homodimerization plays a role in substrate binding and/or ubiquitination and degradation. Component of the SCF(FBXW7) complex consisting of CUL1, RBX1, SKP1 and FBXW7. Interacts (via F-box domain) with SKP1. Interacts (via F-box domain) with pseudophosphatase STYX; the interaction is direct and prevents FBXW7 interaction with SKP1. Interacts with cyclin-E (CCNE1 or CCNE2). Interacts with PSEN1. Forms a trimeric complex with NOTCH1 and SGK1. Interacts with NOTCH1 intracellular domain/NICD and NOTCH4 intracellular domain/NICD. Interacts with NOTCH2 intracellular domain (N2ICD). Interacts with MYC (when phosphorylated). Interacts with USP28, counteracting ubiquitination of MYC. Interacts with JUN. Found in a complex with JUN and PRR7. Interacts with JUN and PRR7; the interaction inhibits ubiquitination-mediated JUN degradation, promoting its phosphorylation and transcriptional activity. Interacts (when phosphorylated at Thr-205) with PIN1, disrupting FBXW7 dimerization and promoting FBXW7 autoubiquitination and degradation. Interacts with UBE2QL1. Interacts with FAM83D; promotes FBXW7 degradation. Interacts with MYCN; FBXW7 competes with AURKA for binding to unphosphorylated MYCN but not for binding to phosphorylated MYCN. Interacts with STOML1. Interacts with NFE2L1. Interacts with USP36, counteracting ubiquitination of MYC. Interacts with NR1D1. Interacts with RICTOR; mediates RICTOR ubiquitination and degradation. Interacts with USP38, counteracting ubiquitination of MYC. (Microbial infection) Interacts (via WD repeats) with SV40 large T antigen (via CPD region). Post-translationally, phosphorylation at Thr-205 promotes interaction with PIN1, leading to disrupt FBXW7 dimerization and promoting FBXW7 autoubiquitination and degradation. Phosphorylated by ATM at Ser-26 in response to DNA damage, promoting recruitment to DNA damage sites and 'Lys-63'-linked ubiquitination of phosphorylated XRCC4. Ubiquitinated: autoubiquitinates following phosphorylation at Thr-205 and subsequent interaction with PIN1. Ubiquitination leads to its proteasomal degradation. Widely expressed. As to expression, expressed in brain.

Its subcellular location is the nucleus. The protein resides in the nucleoplasm. The protein localises to the chromosome. It is found in the cytoplasm. It localises to the nucleolus. It functions in the pathway protein modification; protein ubiquitination. Substrate recognition component of a SCF (SKP1-CUL1-F-box protein) E3 ubiquitin-protein ligase complex which mediates the ubiquitination and subsequent proteasomal degradation of target proteins. Recognizes and binds phosphorylated sites/phosphodegrons within target proteins and thereafter brings them to the SCF complex for ubiquitination. Identified substrates include cyclin-E (CCNE1 or CCNE2), DISC1, JUN, MYC, NOTCH1 released notch intracellular domain (NICD), NFE2L1, NOTCH2, MCL1, MLST8, RICTOR, and probably PSEN1. Acts as a negative regulator of JNK signaling by binding to phosphorylated JUN and promoting its ubiquitination and subsequent degradation. Involved in bone homeostasis and negative regulation of osteoclast differentiation. Regulates the amplitude of the cyclic expression of hepatic core clock genes and genes involved in lipid and glucose metabolism via ubiquitination and proteasomal degradation of their transcriptional repressor NR1D1; CDK1-dependent phosphorylation of NR1D1 is necessary for SCF(FBXW7)-mediated ubiquitination. Also able to promote 'Lys-63'-linked ubiquitination in response to DNA damage. The SCF(FBXW7) complex facilitates double-strand break repair following phosphorylation by ATM: phosphorylation promotes localization to sites of double-strand breaks and 'Lys-63'-linked ubiquitination of phosphorylated XRCC4, enhancing DNA non-homologous end joining. This is F-box/WD repeat-containing protein 7 from Homo sapiens (Human).